The chain runs to 376 residues: Chaperone protein DnaJ (376 aa).

A J domain is found at 5–70; it reads DYYEVLGVAK…QKRAAYDQYG (66 aa). Residues 136–214 form a CR-type zinc finger; the sequence is GYDTQIRVPS…CHGSGKVKET (79 aa). Residues Cys149, Cys152, Cys166, Cys169, Cys188, Cys191, Cys202, and Cys205 each coordinate Zn(2+). 4 CXXCXGXG motif repeats span residues 149–156, 166–173, 188–195, and 202–209; these read CGICHGSG, CPTCHGQG, CPKCHGTG, and CVHCHGSG.

This sequence belongs to the DnaJ family. In terms of assembly, homodimer. Zn(2+) is required as a cofactor.

Its subcellular location is the cytoplasm. Functionally, participates actively in the response to hyperosmotic and heat shock by preventing the aggregation of stress-denatured proteins and by disaggregating proteins, also in an autonomous, DnaK-independent fashion. Unfolded proteins bind initially to DnaJ; upon interaction with the DnaJ-bound protein, DnaK hydrolyzes its bound ATP, resulting in the formation of a stable complex. GrpE releases ADP from DnaK; ATP binding to DnaK triggers the release of the substrate protein, thus completing the reaction cycle. Several rounds of ATP-dependent interactions between DnaJ, DnaK and GrpE are required for fully efficient folding. Also involved, together with DnaK and GrpE, in the DNA replication of plasmids through activation of initiation proteins. The polypeptide is Chaperone protein DnaJ (Burkholderia thailandensis (strain ATCC 700388 / DSM 13276 / CCUG 48851 / CIP 106301 / E264)).